Reading from the N-terminus, the 251-residue chain is uncharacterized protein (251 aa).

The protein to M.jannaschii MJ0638 and MJ1123 and M.tuberculosis Rv2003c.

This is an uncharacterized protein from Methanocaldococcus jannaschii (strain ATCC 43067 / DSM 2661 / JAL-1 / JCM 10045 / NBRC 100440) (Methanococcus jannaschii).